The following is a 1018-amino-acid chain: Pleckstrin homology domain-containing family M member 2 (1018 aa).

The residue at position 1 (Met-1) is an N-acetylmethionine. The interaction with KIF5B stretch occupies residues 1–289; the sequence is MEPREVKDRI…PDQPDACTEL (289 aa). The region spanning 36 to 158 is the RUN domain; that stretch reads RNHDKVLQRL…IRFDLDLDAP (123 aa). Disordered regions lie at residues 210 to 367, 407 to 440, 452 to 520, 526 to 545, and 555 to 583; these read SAIA…SSEL, TWCS…SEGL, ESPS…DSQL, EPLV…EPGT, and DQPS…THPS. Positions 230–245 are enriched in low complexity; it reads STASDLTSSKTSTKSP. A compositionally biased stretch (polar residues) spans 258–270; it reads ETASSDTTPVHTT. A compositionally biased stretch (basic residues) spans 294–306; the sequence is VTKKKKIGKKKKT. Composition is skewed to polar residues over residues 316 to 325 and 347 to 367; these read HPTSSQQKCG and VLAS…SSEL. Ser-423 is modified (phosphoserine). In terms of domain architecture, PH spans 770-872; sequence TITKEGMLHY…WMQHLCQAVS (103 aa).

As to quaternary structure, interacts with KLC2 (via TPR repeats). Interacts with KIF5B. Interacts with BORCS5. Interacts (via RUN domain) with ARL8B (GTP-bound form); PLEKHM1 and PLEKHM2 compete for interaction with ARL8B. Interacts with ARL8A.

It is found in the cytoplasm. Its subcellular location is the lysosome membrane. In terms of biological role, plays a role in lysosomes movement and localization at the cell periphery acting as an effector of ARL8B. Required for ARL8B to exert its effects on lysosome location, recruits kinesin-1 to lysosomes and hence direct their movement toward microtubule plus ends. Binding to ARL8B provides a link from lysosomal membranes to plus-end-directed motility. Critical factor involved in NK cell-mediated cytotoxicity. Drives the polarization of cytolytic granules and microtubule-organizing centers (MTOCs) toward the immune synapse between effector NK lymphocytes and target cells. Required for maintenance of the Golgi apparatus organization. May play a role in membrane tubulation. This is Pleckstrin homology domain-containing family M member 2 from Mus musculus (Mouse).